The primary structure comprises 61 residues: Metallothionein-2 (61 aa).

Position 1 is an N-acetylmethionine (Met1). The interval 1–29 (MDPNCSCATDGSCSCSGSCKCKECKCTTC) is beta. 18 residues coordinate a divalent metal cation: Cys5, Cys7, Cys13, Cys15, Cys19, Cys21, Cys24, Cys26, Cys29, Cys33, Cys34, Cys36, Cys37, Cys41, Cys44, Cys48, Cys50, and Cys57. The interval 30-61 (KKSCCSCCPVGCAKCSQGCVCKEASEKCSCCA) is alpha. Residue Ser58 is modified to Phosphoserine. Residues Cys59 and Cys60 each coordinate a divalent metal cation.

Belongs to the metallothionein superfamily. Type 1 family.

In terms of biological role, metallothioneins have a high content of cysteine residues that bind various heavy metals; these proteins are transcriptionally regulated by both heavy metals and glucocorticoids. The polypeptide is Metallothionein-2 (MT2) (Mesocricetus auratus (Golden hamster)).